The chain runs to 193 residues: ECF RNA polymerase sigma factor SigK (193 aa).

The sigma-70 factor domain-2 stretch occupies residues 35–101 (LYDRTRSRVY…RRAVDRVRSE (67 aa)). A Polymerase core binding motif is present at residues 59–62 (ETTQ). The segment at 140-187 (MGSLSDLQREAIQLAYYEGLTYVQVSERLSANLATIKSRMRGGIRGLK) is sigma-70 factor domain-4. The segment at residues 161-180 (YVQVSERLSANLATIKSRMR) is a DNA-binding region (H-T-H motif).

The protein belongs to the sigma-70 factor family. ECF subfamily. In terms of assembly, interacts transiently with the RNA polymerase catalytic core formed by RpoA, RpoB, RpoC and RpoZ (2 alpha, 1 beta, 1 beta' and 1 omega subunit) to form the RNA polymerase holoenzyme that can initiate transcription. Interacts (via sigma-70 factor domain 4) with anti-sigma-K factor RskA.

Its function is as follows. Sigma factors are initiation factors that promote the attachment of RNA polymerase to specific initiation sites and are then released. Extracytoplasmic function (ECF) sigma factors are held in an inactive form by an anti-sigma factor until released by regulated intramembrane proteolysis. The polypeptide is ECF RNA polymerase sigma factor SigK (sigK) (Mycobacterium sp. (strain KMS)).